Consider the following 450-residue polypeptide: Bifunctional protein GlmU (450 aa).

The interval 1–229 (MRRHAIILAA…VEEIMGVNDR (229 aa)) is pyrophosphorylase. Residues 8–11 (LAAG), Lys22, Gln72, and 77–78 (GT) contribute to the UDP-N-acetyl-alpha-D-glucosamine site. Asp102 provides a ligand contact to Mg(2+). Positions 139, 154, and 227 each coordinate UDP-N-acetyl-alpha-D-glucosamine. Position 227 (Asn227) interacts with Mg(2+). Positions 230 to 250 (VMLSQAEKAMQRRTNHYHMLN) are linker. An N-acetyltransferase region spans residues 251-450 (GVTIIDPDST…RQTTKEGYRK (200 aa)). Arg332 and Lys350 together coordinate UDP-N-acetyl-alpha-D-glucosamine. His362 (proton acceptor) is an active-site residue. UDP-N-acetyl-alpha-D-glucosamine-binding residues include Tyr365 and Asn376. Acetyl-CoA contacts are provided by residues 385-386 (NY), Ala422, and Arg439.

It in the N-terminal section; belongs to the N-acetylglucosamine-1-phosphate uridyltransferase family. This sequence in the C-terminal section; belongs to the transferase hexapeptide repeat family. As to quaternary structure, homotrimer. Requires Mg(2+) as cofactor.

The protein localises to the cytoplasm. The catalysed reaction is alpha-D-glucosamine 1-phosphate + acetyl-CoA = N-acetyl-alpha-D-glucosamine 1-phosphate + CoA + H(+). The enzyme catalyses N-acetyl-alpha-D-glucosamine 1-phosphate + UTP + H(+) = UDP-N-acetyl-alpha-D-glucosamine + diphosphate. It functions in the pathway nucleotide-sugar biosynthesis; UDP-N-acetyl-alpha-D-glucosamine biosynthesis; N-acetyl-alpha-D-glucosamine 1-phosphate from alpha-D-glucosamine 6-phosphate (route II): step 2/2. The protein operates within nucleotide-sugar biosynthesis; UDP-N-acetyl-alpha-D-glucosamine biosynthesis; UDP-N-acetyl-alpha-D-glucosamine from N-acetyl-alpha-D-glucosamine 1-phosphate: step 1/1. Its pathway is bacterial outer membrane biogenesis; LPS lipid A biosynthesis. Catalyzes the last two sequential reactions in the de novo biosynthetic pathway for UDP-N-acetylglucosamine (UDP-GlcNAc). The C-terminal domain catalyzes the transfer of acetyl group from acetyl coenzyme A to glucosamine-1-phosphate (GlcN-1-P) to produce N-acetylglucosamine-1-phosphate (GlcNAc-1-P), which is converted into UDP-GlcNAc by the transfer of uridine 5-monophosphate (from uridine 5-triphosphate), a reaction catalyzed by the N-terminal domain. This Staphylococcus aureus (strain Mu50 / ATCC 700699) protein is Bifunctional protein GlmU.